An 895-amino-acid polypeptide reads, in one-letter code: Stonin-2 (895 aa).

Disordered stretches follow at residues Trp15–Lys119, Ser145–Val222, and Glu234–Leu280. The span at Ser64–Glu73 shows a compositional bias: basic and acidic residues. Residues Ser145–Leu193 show a composition bias toward polar residues. Pro residues predominate over residues Pro241–Pro251. The residue at position 253 (Thr253) is a Phosphothreonine. Residues Ser278 and Ser299 each carry the phosphoserine modification. Short sequence motifs (NPF) lie at residues Asn310 to Phe312 and Asn326 to Phe328. The disordered stretch occupies residues Gln386 to Pro421. One can recognise an SHD domain in the interval Gly424–Ser557. An MHD domain is found at Glu565–Glu872. Residue Ser759 is modified to Phosphoserine.

It belongs to the Stoned B family. In terms of assembly, interacts with the second C2 domain of synaptotagmins SYT1 and SYT2. Interacts with EPS15, EPS15R and ITSN1. Interacts indirectly with the AP-2 adapter complex. Interacts with TOR1A and COPS4; the interaction controls STON2 protein stability. Phosphorylated in vitro by PKD. Post-translationally, neddylated; deneddylated via its interaction with the COP9 signalosome (CSN) complex through TOR1A and COPS4. In terms of processing, ubiquitinated; leading to its degradation.

Its subcellular location is the cytoplasm. The protein localises to the membrane. It localises to the synapse. The protein resides in the synaptosome. Functionally, adapter protein involved in endocytic machinery. Involved in the synaptic vesicle recycling. May facilitate clathrin-coated vesicle uncoating. In Mus musculus (Mouse), this protein is Stonin-2 (Ston2).